The primary structure comprises 369 residues: uncharacterized protein (369 aa).

This is an uncharacterized protein from Caenorhabditis elegans.